A 503-amino-acid chain; its full sequence is Endoglycoceramidase (503 aa).

Positions 1–21 are cleaved as a signal peptide; it reads MAETQPLVFVLMSISAILTAG. Asn-72, Asn-108, and Asn-205 each carry an N-linked (GlcNAc...) asparagine glycan. The Proton donor role is filled by Glu-239. Residues Asn-307, Asn-409, and Asn-485 are each glycosylated (N-linked (GlcNAc...) asparagine).

It belongs to the glycosyl hydrolase 5 (cellulase A) family.

Its subcellular location is the secreted. It localises to the nematocyst. It catalyses the reaction an oligoglycosyl-(1-&gt;4)-beta-D-glucosyl-(1&lt;-&gt;1)-ceramide + H2O = an oligoglycosyl-(1-&gt;4)-D-glucose + an N-acyl-sphingoid base. With respect to regulation, completely inhibited by Hg(2+). Cu(2+) and zinc have no effect on enzyme activity. Lithium, potassium, manganese, Ni(2+), calcium, magnesium and EDTA have no significant effect on enzyme activity. Enzyme requires presence of detergents such as Triton X-100 and Lubrol PX for the hydrolysis of glycosphingolipids. Taurodeoxycholate strongly inhibits the enzyme activity and SDS completely inhibits the enzyme activity. Functionally, hydrolysis of the glycosidic linkage between oligosaccharides and ceramides of glycosphingolipids, especially b-series polysialogangliosides. The chain is Endoglycoceramidase from Cyanea nozakii (Jellyfish).